The chain runs to 385 residues: 1-deoxy-D-xylulose 5-phosphate reductoisomerase (385 aa).

Residues T10, G11, S12, I13, and N124 each coordinate NADPH. Residue K125 coordinates 1-deoxy-D-xylulose 5-phosphate. Position 126 (E126) interacts with NADPH. D150 lines the Mn(2+) pocket. S151, E152, S176, and H199 together coordinate 1-deoxy-D-xylulose 5-phosphate. Residue E152 participates in Mn(2+) binding. G205 contacts NADPH. Residues S212, N217, K218, and E221 each coordinate 1-deoxy-D-xylulose 5-phosphate. E221 provides a ligand contact to Mn(2+).

Belongs to the DXR family. Requires Mg(2+) as cofactor. The cofactor is Mn(2+).

It carries out the reaction 2-C-methyl-D-erythritol 4-phosphate + NADP(+) = 1-deoxy-D-xylulose 5-phosphate + NADPH + H(+). It participates in isoprenoid biosynthesis; isopentenyl diphosphate biosynthesis via DXP pathway; isopentenyl diphosphate from 1-deoxy-D-xylulose 5-phosphate: step 1/6. Catalyzes the NADPH-dependent rearrangement and reduction of 1-deoxy-D-xylulose-5-phosphate (DXP) to 2-C-methyl-D-erythritol 4-phosphate (MEP). The polypeptide is 1-deoxy-D-xylulose 5-phosphate reductoisomerase (Clostridium kluyveri (strain NBRC 12016)).